The sequence spans 462 residues: 3-isopropylmalate dehydratase large subunit (462 aa).

The [4Fe-4S] cluster site is built by cysteine 337, cysteine 397, and cysteine 400.

It belongs to the aconitase/IPM isomerase family. LeuC type 1 subfamily. Heterodimer of LeuC and LeuD. It depends on [4Fe-4S] cluster as a cofactor.

It carries out the reaction (2R,3S)-3-isopropylmalate = (2S)-2-isopropylmalate. It functions in the pathway amino-acid biosynthesis; L-leucine biosynthesis; L-leucine from 3-methyl-2-oxobutanoate: step 2/4. In terms of biological role, catalyzes the isomerization between 2-isopropylmalate and 3-isopropylmalate, via the formation of 2-isopropylmaleate. The polypeptide is 3-isopropylmalate dehydratase large subunit (Listeria innocua serovar 6a (strain ATCC BAA-680 / CLIP 11262)).